The chain runs to 195 residues: Nucleoid occlusion factor SlmA (195 aa).

An HTH tetR-type domain is found at 6 to 66 (PSRRESILQA…ALIEFAEEAV (61 aa)). The segment at residues 29 to 48 (TTAGLAKTVGVTEAALYRHF) is a DNA-binding region (H-T-H motif). The stretch at 118–138 (RKRASQFFERLETQIRQALKE) forms a coiled coil.

This sequence belongs to the nucleoid occlusion factor SlmA family. Homodimer. Interacts with FtsZ.

It is found in the cytoplasm. It localises to the nucleoid. Its function is as follows. Required for nucleoid occlusion (NO) phenomenon, which prevents Z-ring formation and cell division over the nucleoid. Acts as a DNA-associated cell division inhibitor that binds simultaneously chromosomal DNA and FtsZ, and disrupts the assembly of FtsZ polymers. SlmA-DNA-binding sequences (SBS) are dispersed on non-Ter regions of the chromosome, preventing FtsZ polymerization at these regions. The sequence is that of Nucleoid occlusion factor SlmA from Marinobacter nauticus (strain ATCC 700491 / DSM 11845 / VT8) (Marinobacter aquaeolei).